Reading from the N-terminus, the 80-residue chain is MLIPVVCFTCGFPIGTYAAIFDKARTEYIKTKMDGTLPQNIPLDASLQIELKDLITALGIPMRVCCRTHLITTLDYRKYY.

Zn(2+) is bound by residues Cys7, Cys10, Cys65, and Cys66.

The protein belongs to the archaeal RpoN/eukaryotic RPB10 RNA polymerase subunit family. In terms of assembly, part of the viral DNA-directed RNA polymerase that consists of 8 polII-like subunits (RPB1, RPB2, RPB3, RPB5, RPB6, RPB7, RPB9, RPB10), a capping enzyme and a termination factor.

The protein resides in the host cytoplasm. In terms of biological role, component of the DNA-directed RNA polymerase (RNAP) that catalyzes the transcription in the cytoplasm of viral DNA into RNA using the four ribonucleoside triphosphates as substrates. The chain is DNA-directed RNA polymerase RPB10 homolog from African swine fever virus (strain Badajoz 1971 Vero-adapted) (Ba71V).